A 559-amino-acid chain; its full sequence is Proton-coupled zinc antiporter SLC30A9, mitochondrial (559 aa).

The tract at residues 58-96 (SSDQKEDGGSKGTSAASSPEKSMAGLDPSKPEQKSTFPP) is disordered. 5 helical membrane-spanning segments follow: residues 230-250 (VVIV…LAWV), 305-325 (GVGI…IGLL), 333-353 (LLWA…TLLV), 389-409 (AAAV…SLTG), and 415-435 (SLGS…LIYT). The short motif at 453 to 457 (LTELL) is the LXXLL motif element.

Belongs to the cation diffusion facilitator (CDF) transporter (TC 2.A.4) family. SLC30A subfamily.

The protein localises to the mitochondrion membrane. The protein resides in the nucleus. Its subcellular location is the endoplasmic reticulum. It carries out the reaction Zn(2+)(in) + 2 H(+)(out) = Zn(2+)(out) + 2 H(+)(in). Functionally, mitochondrial proton-coupled zinc ion antiporter mediating the export of zinc from the mitochondria and involved in zinc homeostasis, zinc mobilization as well as mitochondrial morphology and health. In nucleus, may function as a secondary coactivator for nuclear receptors. The polypeptide is Proton-coupled zinc antiporter SLC30A9, mitochondrial (slc30a9) (Xenopus laevis (African clawed frog)).